Here is a 220-residue protein sequence, read N- to C-terminus: Fructose-6-phosphate aldolase (220 aa).

The active-site Schiff-base intermediate with substrate is K85.

This sequence belongs to the transaldolase family. Type 3A subfamily. In terms of assembly, homodecamer.

The protein localises to the cytoplasm. The enzyme catalyses beta-D-fructose 6-phosphate = dihydroxyacetone + D-glyceraldehyde 3-phosphate. Its function is as follows. Catalyzes the reversible formation of fructose 6-phosphate from dihydroxyacetone and D-glyceraldehyde 3-phosphate via an aldolization reaction. The sequence is that of Fructose-6-phosphate aldolase from Enterobacter sp. (strain 638).